Reading from the N-terminus, the 211-residue chain is Dual specificity protein phosphatase 26 (211 aa).

The region spanning 60-207 is the Tyrosine-protein phosphatase domain; it reads NHADEVWPGL…LLALDRRLRQ (148 aa). Catalysis depends on Cys152, which acts as the Phosphocysteine intermediate.

Belongs to the protein-tyrosine phosphatase family. Non-receptor class dual specificity subfamily. In terms of assembly, interacts with HSF4. In terms of tissue distribution, brain. In the brain it is expressed ubiquitously except in the hippocampus. Expressed in embryonal cancers (retinoblastoma, neuroepithilioma and neuroblastoma) and in anaplatic thyroid cancer.

Its subcellular location is the cytoplasm. It is found in the nucleus. It localises to the golgi apparatus. It catalyses the reaction O-phospho-L-tyrosyl-[protein] + H2O = L-tyrosyl-[protein] + phosphate. It carries out the reaction O-phospho-L-seryl-[protein] + H2O = L-seryl-[protein] + phosphate. The catalysed reaction is O-phospho-L-threonyl-[protein] + H2O = L-threonyl-[protein] + phosphate. In terms of biological role, inactivates MAPK1 and MAPK3 which leads to dephosphorylation of heat shock factor protein 4 and a reduction in its DNA-binding activity. Inhibits MAP kinase p38 by dephosphorylating it and inhibits p38-mediated apoptosis in anaplastic thyroid cancer cells. Can also induce activation of MAP kinase p38 and c-Jun N-terminal kinase (JNK). In Homo sapiens (Human), this protein is Dual specificity protein phosphatase 26 (DUSP26).